The sequence spans 695 residues: Follicle-stimulating hormone receptor (695 aa).

An N-terminal signal peptide occupies residues 1 to 17 (MTFLLVSLLAFLSLGSG). 2 disulfides stabilise this stretch: C18–C25 and C23–C32. The 29-residue stretch at 18–46 (CHHRICHCWHRVFLCQESKVTEIPSDLPR) folds into the LRRNT domain. Topologically, residues 18–366 (CHHRICHCWH…EDIMGYDILR (349 aa)) are extracellular. LRR repeat units lie at residues 49-72 (VELR…FGDL), 73-97 (EKIE…LSKL), 98-118 (HEIR…AFQN), 119-143 (LPNL…KIQS), 144-169 (LQKV…MGLS), 170-192 (FESM…AFNG), 193-216 (TQLD…VFQG), 217-240 (ASGP…GLEN), and 241-259 (IKKL…PSLD). N93 is a glycosylation site (N-linked (GlcNAc...) asparagine). Residues N191 and N199 are each glycosylated (N-linked (GlcNAc...) asparagine). Cystine bridges form between C275–C346, C276–C292, C276–C356, and C292–C338. N293 is a glycosylation site (N-linked (GlcNAc...) asparagine). Y335 carries the post-translational modification Sulfotyrosine. Residues 367 to 387 (VLIWFISILAITGNIIVLMIL) form a helical membrane-spanning segment. Residues 388–398 (ITSQYKLTVPR) lie on the Cytoplasmic side of the membrane. The chain crosses the membrane as a helical span at residues 399–419 (FLMCNLAFADLCIGIYLLLIA). Over 420–444 (SVDIYTKSQYHNYAIDWQTGAGCDA) the chain is Extracellular. Residues 445-465 (AGFFTVFASELSVYTLTVITL) form a helical membrane-spanning segment. Over 466 to 487 (ERWHTITHAMQLECKVQLRHAA) the chain is Cytoplasmic. A helical transmembrane segment spans residues 488–508 (IIMLLGWIFAFMVALFPIFGI). Residues 509 to 528 (SSYMKVSICLPMDIDSPLSQ) lie on the Extracellular side of the membrane. The chain crosses the membrane as a helical span at residues 529–550 (LYVMSLLVLNVLAFVVICCCYA). Topologically, residues 551–573 (HIYLTVRNPNIVSSSSDTKIAKR) are cytoplasmic. A helical membrane pass occupies residues 574-594 (MAMLIFTDFLCMAPISFFAIS). At 595–608 (ASLKVPLITVSKSK) the chain is on the extracellular side. Residues 609–629 (ILLVLFYPINSCANPFLYAIF) form a helical membrane-spanning segment. Topologically, residues 630–695 (TKNFRRDFFI…LIPLRHLAKN (66 aa)) are cytoplasmic.

The protein belongs to the G-protein coupled receptor 1 family. FSH/LSH/TSH subfamily. Homotrimer. Functions as a homotrimer binding the FSH hormone heterodimer composed of CGA and FSHB. Interacts with ARRB2. Interacts with APPL2; interaction is independent of follicle stimulating hormone stimulation. N-glycosylated; indirectly required for FSH-binding, possibly via a conformational change that allows high affinity binding of hormone. In terms of processing, sulfated.

It is found in the cell membrane. In terms of biological role, g protein-coupled receptor for follitropin, the follicle-stimulating hormone. Through cAMP production activates the downstream PI3K-AKT and ERK1/ERK2 signaling pathways. The chain is Follicle-stimulating hormone receptor (FSHR) from Felis catus (Cat).